We begin with the raw amino-acid sequence, 75 residues long: Large ribosomal subunit protein bL31 (75 aa).

This sequence belongs to the bacterial ribosomal protein bL31 family. Type A subfamily. Part of the 50S ribosomal subunit.

Binds the 23S rRNA. The protein is Large ribosomal subunit protein bL31 of Chlorobium luteolum (strain DSM 273 / BCRC 81028 / 2530) (Pelodictyon luteolum).